The following is a 101-amino-acid chain: Small ubiquitin-related modifier 1 (101 aa).

S2 bears the N-acetylserine mark. S2 carries the post-translational modification Phosphoserine. A Glycyl lysine isopeptide (Lys-Gly) (interchain with G-Cter in SUMO1); alternate cross-link involves residue K7. K7 is covalently cross-linked (Glycyl lysine isopeptide (Lys-Gly) (interchain with G-Cter in SUMO2); alternate). S9 is subject to Phosphoserine. Glycyl lysine isopeptide (Lys-Gly) (interchain with G-Cter in SUMO2) cross-links involve residues K16, K17, and K23. The Ubiquitin-like domain occupies 20-97 (EYIKLKVIGQ…IEVYHEQTGG (78 aa)). K25 is covalently cross-linked (Glycyl lysine isopeptide (Lys-Gly) (interchain with G-Cter in SUMO1)). Phosphoserine is present on S32. Residues K37, K39, K45, and K46 each participate in a glycyl lysine isopeptide (Lys-Gly) (interchain with G-Cter in SUMO2) cross-link. A Glycyl lysine isopeptide (Gly-Lys) (interchain with K-? in acceptor proteins) cross-link involves residue G97. Positions 98-101 (HSTV) are excised as a propeptide.

The protein belongs to the ubiquitin family. SUMO subfamily. As to quaternary structure, covalently attached to KCNB1; UBE2I increases cross-linking with KCNB1 and PIAS1 decreases cross-links with KCNB1. Interacts with SAE2, RANBP2, PIAS1 and PIAS2. Interacts with PRKN. Covalently attached to a number of proteins such as IKFZ1, PML, RANGAP1, HIPK2, SP100, p53, p73-alpha, MDM2, JUN, DNMT3B and TDG. Also interacts with HIF1A, HIPK2, HIPK3, CHD3, EXOSC9, RAD51 and RAD52. Interacts with USP25 (via ts SIM domain); the interaction weakly sumoylates USP25. Interacts with SIMC1, CASP8AP2, RNF111 and SOBP (via SIM domains). Interacts with BHLHE40/DEC1. Interacts with RWDD3. Interacts with UBE2I/UBC9 and this interaction is enhanced in the presence of RWDD3. Interacts with MTA1. Interacts with SENP2. Interacts with HINT1. Post-translationally, cleavage of precursor form by SENP1, SENP2 is necessary for function. Polymeric SUMO1 chains undergo polyubiquitination by RNF4.

Its subcellular location is the nucleus membrane. The protein resides in the nucleus speckle. It is found in the cytoplasm. It localises to the nucleus. The protein localises to the PML body. Its subcellular location is the cell membrane. In terms of biological role, ubiquitin-like protein that can be covalently attached to proteins as a monomer or a lysine-linked polymer. Covalent attachment via an isopeptide bond to its substrates requires prior activation by the E1 complex SAE1-SAE2 and linkage to the E2 enzyme UBE2I, and can be promoted by E3 ligases such as PIAS1-4, RANBP2 or CBX4. This post-translational modification on lysine residues of proteins plays a crucial role in a number of cellular processes such as nuclear transport, DNA replication and repair, mitosis and signal transduction. Involved for instance in targeting RANGAP1 to the nuclear pore complex protein RANBP2. Covalently attached to the voltage-gated potassium channel KCNB1; this modulates the gating characteristics of KCNB1. Polymeric SUMO1 chains are also susceptible to polyubiquitination which functions as a signal for proteasomal degradation of modified proteins. May also regulate a network of genes involved in palate development. Covalently attached to ZFHX3. The chain is Small ubiquitin-related modifier 1 (SUMO1) from Cervus nippon (Sika deer).